A 166-amino-acid polypeptide reads, in one-letter code: NADPH-dependent 7-cyano-7-deazaguanine reductase (166 aa).

Cysteine 57 serves as the catalytic Thioimide intermediate. The active-site Proton donor is the aspartate 64. Substrate is bound by residues 79–81 (VES) and 98–99 (HE).

It belongs to the GTP cyclohydrolase I family. QueF type 1 subfamily.

It is found in the cytoplasm. The catalysed reaction is 7-aminomethyl-7-carbaguanine + 2 NADP(+) = 7-cyano-7-deazaguanine + 2 NADPH + 3 H(+). The protein operates within tRNA modification; tRNA-queuosine biosynthesis. Catalyzes the NADPH-dependent reduction of 7-cyano-7-deazaguanine (preQ0) to 7-aminomethyl-7-deazaguanine (preQ1). This chain is NADPH-dependent 7-cyano-7-deazaguanine reductase, found in Staphylococcus saprophyticus subsp. saprophyticus (strain ATCC 15305 / DSM 20229 / NCIMB 8711 / NCTC 7292 / S-41).